The sequence spans 408 residues: Argininosuccinate synthase (408 aa).

Residues 16–24 (AYSGGLDTS) and A44 each bind ATP. Residues Y96 and S101 each contribute to the L-citrulline site. G126 lines the ATP pocket. Positions 128, 132, and 133 each coordinate L-aspartate. Position 132 (N132) interacts with L-citrulline. Residues R136, S185, S194, E270, and Y282 each contribute to the L-citrulline site.

The protein belongs to the argininosuccinate synthase family. Type 1 subfamily. In terms of assembly, homotetramer.

The protein localises to the cytoplasm. The enzyme catalyses L-citrulline + L-aspartate + ATP = 2-(N(omega)-L-arginino)succinate + AMP + diphosphate + H(+). It functions in the pathway amino-acid biosynthesis; L-arginine biosynthesis; L-arginine from L-ornithine and carbamoyl phosphate: step 2/3. This chain is Argininosuccinate synthase, found in Shewanella woodyi (strain ATCC 51908 / MS32).